The sequence spans 52 residues: Venom peptide 4a (52 aa).

Residues methionine 1–alanine 23 form the signal peptide. 3 AXPX repeats span residues alanine 23–leucine 26, alanine 31–asparagine 34, and alanine 39–leucine 42. The propeptide occupies glutamate 24–proline 41. Residue alanine 51 is modified to Alanine amide.

As to expression, expressed by the venom gland.

It localises to the secreted. The chain is Venom peptide 4a from Eumenes pomiformis (Potter wasp).